A 158-amino-acid polypeptide reads, in one-letter code: Protein Smg homolog (158 aa).

The protein belongs to the Smg family.

This is Protein Smg homolog from Shewanella sp. (strain ANA-3).